Consider the following 256-residue polypeptide: Pimeloyl-[acyl-carrier protein] methyl ester esterase (256 aa).

The region spanning 15–242 (HLVLLHGWGL…AAHAPFISHP (228 aa)) is the AB hydrolase-1 domain. Substrate contacts are provided by residues Trp22, 82–83 (SL), and 143–147 (FLALQ). Ser82 acts as the Nucleophile in catalysis. Residues Asp207 and His235 contribute to the active site. Position 235 (His235) interacts with substrate.

It belongs to the AB hydrolase superfamily. Carboxylesterase BioH family. In terms of assembly, monomer.

It localises to the cytoplasm. It catalyses the reaction 6-carboxyhexanoyl-[ACP] methyl ester + H2O = 6-carboxyhexanoyl-[ACP] + methanol + H(+). Its pathway is cofactor biosynthesis; biotin biosynthesis. Its function is as follows. The physiological role of BioH is to remove the methyl group introduced by BioC when the pimeloyl moiety is complete. It allows to synthesize pimeloyl-ACP via the fatty acid synthetic pathway through the hydrolysis of the ester bonds of pimeloyl-ACP esters. The polypeptide is Pimeloyl-[acyl-carrier protein] methyl ester esterase (Shigella boydii serotype 18 (strain CDC 3083-94 / BS512)).